A 660-amino-acid polypeptide reads, in one-letter code: Transcription activator of gluconeogenesis CHGG_09150 (660 aa).

Residues 1–12 show a composition bias toward acidic residues; that stretch reads MSDSENEYDETD. Residues 1-52 form a disordered region; sequence MSDSENEYDETDQLVKEEDEKMSDQRLTSEGADTSAEPKKKYDPKDPLRPRR. Basic and acidic residues-rich tracts occupy residues 13–24 and 36–49; these read QLVKEEDEKMSD and AEPK…DPLR. Positions 59 to 87 form a DNA-binding region, zn(2)-C6 fungal-type; sequence CFACQRAHLTCGDERPCQRCIKRNLMESC. Disordered regions lie at residues 98–144, 170–191, and 319–368; these read LHDA…TFFS, FANQ…QISG, and PTSI…RQSN. Over residues 129–144 the composition is skewed to polar residues; the sequence is SIQTSEASSNQGTFFS. Residues 173 to 184 show a composition bias toward low complexity; that stretch reads QQSPTSPSFQTS. Composition is skewed to polar residues over residues 320–332 and 344–368; these read TSIQ…TNSP and TMAT…RQSN. The 72-residue stretch at 455-526 folds into the PAS domain; that stretch reads SLLEYEEFMH…NSKARVGLAT (72 aa). The disordered stretch occupies residues 587–613; sequence APDKDDGTGESSTDGQLPQKDPRNSIL.

The protein belongs to the ERT1/acuK family.

The protein resides in the nucleus. Transcription factor which regulates nonfermentable carbon utilization. Activator of gluconeogenetic genes. This Chaetomium globosum (strain ATCC 6205 / CBS 148.51 / DSM 1962 / NBRC 6347 / NRRL 1970) (Soil fungus) protein is Transcription activator of gluconeogenesis CHGG_09150.